The chain runs to 121 residues: Holo-[acyl-carrier-protein] synthase (121 aa).

Mg(2+) is bound by residues Asp-8 and Glu-58.

This sequence belongs to the P-Pant transferase superfamily. AcpS family. The cofactor is Mg(2+).

It is found in the cytoplasm. The catalysed reaction is apo-[ACP] + CoA = holo-[ACP] + adenosine 3',5'-bisphosphate + H(+). Its function is as follows. Transfers the 4'-phosphopantetheine moiety from coenzyme A to a Ser of acyl-carrier-protein. This chain is Holo-[acyl-carrier-protein] synthase, found in Bacillus pumilus (strain SAFR-032).